Here is a 943-residue protein sequence, read N- to C-terminus: UvrABC system protein A (943 aa).

31–38 (GLSGSGKS) provides a ligand contact to ATP. The C4-type zinc finger occupies 253-280 (CPHCGYSVPELEPRLFSFNNPAGACPTC). ABC transporter domains are found at residues 310 to 587 (WDRR…PHSI) and 607 to 937 (LDKK…RFLK). 640-647 (GVSGSGKS) is a binding site for ATP. A C4-type zinc finger spans residues 740-766 (CEACQGDGVIKVEMHFLPDVYVPCEQC).

This sequence belongs to the ABC transporter superfamily. UvrA family. In terms of assembly, forms a heterotetramer with UvrB during the search for lesions.

It is found in the cytoplasm. In terms of biological role, the UvrABC repair system catalyzes the recognition and processing of DNA lesions. UvrA is an ATPase and a DNA-binding protein. A damage recognition complex composed of 2 UvrA and 2 UvrB subunits scans DNA for abnormalities. When the presence of a lesion has been verified by UvrB, the UvrA molecules dissociate. The sequence is that of UvrABC system protein A from Pasteurella multocida (strain Pm70).